A 139-amino-acid polypeptide reads, in one-letter code: Translation initiation factor 5A (139 aa).

At lysine 36 the chain carries Hypusine.

This sequence belongs to the eIF-5A family.

The protein resides in the cytoplasm. Functionally, functions by promoting the formation of the first peptide bond. This chain is Translation initiation factor 5A (eif5a), found in Aeropyrum pernix (strain ATCC 700893 / DSM 11879 / JCM 9820 / NBRC 100138 / K1).